Here is a 549-residue protein sequence, read N- to C-terminus: Oxygen-dependent choline dehydrogenase (549 aa).

4–33 (DFVIIGSGSAGSAMAYRLSEDGRYSVIVIE) is an FAD binding site. Catalysis depends on H465, which acts as the Proton acceptor.

This sequence belongs to the GMC oxidoreductase family. The cofactor is FAD.

The catalysed reaction is choline + A = betaine aldehyde + AH2. The enzyme catalyses betaine aldehyde + NAD(+) + H2O = glycine betaine + NADH + 2 H(+). It functions in the pathway amine and polyamine biosynthesis; betaine biosynthesis via choline pathway; betaine aldehyde from choline (cytochrome c reductase route): step 1/1. Functionally, involved in the biosynthesis of the osmoprotectant glycine betaine. Catalyzes the oxidation of choline to betaine aldehyde and betaine aldehyde to glycine betaine at the same rate. The protein is Oxygen-dependent choline dehydrogenase of Brucella melitensis biotype 1 (strain ATCC 23456 / CCUG 17765 / NCTC 10094 / 16M).